Consider the following 601-residue polypeptide: Kelch repeat and BTB domain-containing protein 8 (601 aa).

A disordered region spans residues 1–25; the sequence is MAASADLSKSSPTPNGIPSSDPASD. Polar residues predominate over residues 7 to 22; the sequence is LSKSSPTPNGIPSSDP. In terms of domain architecture, BTB spans 49–117; it reads TDIVVEVDHG…AYTSRVILTE (69 aa). The BACK domain occupies 153-252; sequence IGVFIFADHY…PLMEDTFIEK (100 aa). Kelch repeat units lie at residues 336–390, 391–441, 443–481, 483–532, and 542–588; these read DIYI…YCCG, KMYA…EYKE, IYVLQGEFFLFYEPQKDYWGFLTPMTVPRIQGLAAVYKD, IYYI…LFQN, and QVTV…FECA.

This sequence belongs to the KBTBD8 family. As to quaternary structure, component of the BCR(KBTBD8) E3 ubiquitin ligase complex, at least composed of CUL3, KBTBD8 and RBX1.

It is found in the cytoplasm. Its subcellular location is the cytoskeleton. The protein localises to the spindle. The protein resides in the golgi apparatus. Its function is as follows. Substrate-specific adapter of a BCR (BTB-CUL3-RBX1) E3 ubiquitin ligase complex that acts as a regulator of neural crest specification. The BCR(KBTBD8) complex acts by mediating monoubiquitination of NOLC1 and TCOF1: monoubiquitination promotes the formation of a NOLC1-TCOF1 complex that acts as a platform to connect RNA polymerase I with enzymes responsible for ribosomal processing and modification, leading to remodel the translational program of differentiating cells in favor of neural crest specification. This chain is Kelch repeat and BTB domain-containing protein 8 (KBTBD8), found in Homo sapiens (Human).